The primary structure comprises 513 residues: ATP synthase subunit alpha (513 aa).

169 to 176 contributes to the ATP binding site; the sequence is GDRQTGKT.

It belongs to the ATPase alpha/beta chains family. In terms of assembly, F-type ATPases have 2 components, CF(1) - the catalytic core - and CF(0) - the membrane proton channel. CF(1) has five subunits: alpha(3), beta(3), gamma(1), delta(1), epsilon(1). CF(0) has three main subunits: a(1), b(2) and c(9-12). The alpha and beta chains form an alternating ring which encloses part of the gamma chain. CF(1) is attached to CF(0) by a central stalk formed by the gamma and epsilon chains, while a peripheral stalk is formed by the delta and b chains.

Its subcellular location is the cell inner membrane. It catalyses the reaction ATP + H2O + 4 H(+)(in) = ADP + phosphate + 5 H(+)(out). In terms of biological role, produces ATP from ADP in the presence of a proton gradient across the membrane. The alpha chain is a regulatory subunit. The polypeptide is ATP synthase subunit alpha (Shewanella denitrificans (strain OS217 / ATCC BAA-1090 / DSM 15013)).